Consider the following 762-residue polypeptide: Hyperosmolality-gated Ca2+ permeable channel 2.2 (762 aa).

10 helical membrane passes run 3-23, 90-110, 144-164, 354-374, 402-422, 445-465, 500-520, 557-577, 594-614, and 615-635; these read VSAL…LVSL, MVIC…AFVL, LWVH…LLYF, IATL…VTFV, VITG…VPPL, KILY…GSVI, GWAG…NLIA, VIAP…YLIY, QYWP…QVIA, and LGFF…PLIL.

This sequence belongs to the CSC1 (TC 1.A.17) family.

Its subcellular location is the membrane. Its function is as follows. Acts as an osmosensitive calcium-permeable cation channel. The chain is Hyperosmolality-gated Ca2+ permeable channel 2.2 from Arabidopsis thaliana (Mouse-ear cress).